We begin with the raw amino-acid sequence, 417 residues long: Protein translocase subunit SecD (417 aa).

The next 6 membrane-spanning stretches (helical) occupy residues 9-29 (LLVSVLAIVIAFAVFIKPLVS), 236-256 (ASMKAFAIGLAGVFLFMLLYY), 258-278 (LSGLVADIVLLLYTLLLLAVM), 288-308 (PGMAGIILSIGMAVDANVLIF), 333-353 (FTTILDSNVTTLMAAAVLFYL), and 360-380 (GFAVTLALGVLISMFTAVTVT).

Belongs to the SecD/SecF family. SecD subfamily. Forms a complex with SecF. Part of the essential Sec protein translocation apparatus which comprises SecA, SecYEG and auxiliary proteins SecDF. Other proteins may also be involved.

It localises to the cell membrane. Functionally, part of the Sec protein translocase complex. Interacts with the SecYEG preprotein conducting channel. SecDF uses the proton motive force (PMF) to complete protein translocation after the ATP-dependent function of SecA. This Acidaminococcus fermentans (strain ATCC 25085 / DSM 20731 / CCUG 9996 / CIP 106432 / VR4) protein is Protein translocase subunit SecD.